We begin with the raw amino-acid sequence, 272 residues long: MYRIIAVDLDGTLLTSENKITKYTKEIIQILIQKKFYFVFASGRHYIDIMKIKDSLKINIFIISSNGSKIYNLDNNLIFSDNLDENIASKLCRIKYSDKEIITQVYQNDQWYINNNKVENNFCSLLSSLQYKYFYPDDLNFKNISKIFFTSRNFQKLHILKRKIINFYGNKVHVNFSIPGCLEIVSGDHLKGYGLKLIANLLGVSLKNCIAFGDGMNDQDMLKVAGKAYIMKNSDPHLKIALPHLEIIESNDNDGVARCLNKIFIENNKEML.

Catalysis depends on Asp8, which acts as the Nucleophile. Residue Asp8 participates in Mg(2+) binding. Leu9 is a binding site for phosphate. Residue Asp10 participates in Mg(2+) binding. Phosphate contacts are provided by residues Ser42–Gly43 and Lys191. Residue Asp214 coordinates Mg(2+). Position 217 (Asn217) interacts with phosphate.

The protein belongs to the HAD-like hydrolase superfamily. Cof family. Mg(2+) serves as cofactor.

The polypeptide is Putative phosphatase BU028/BU029 (Buchnera aphidicola subsp. Acyrthosiphon pisum (strain APS) (Acyrthosiphon pisum symbiotic bacterium)).